We begin with the raw amino-acid sequence, 365 residues long: NAD(P)H-quinone oxidoreductase subunit 1, chloroplastic (365 aa).

Transmembrane regions (helical) follow at residues 29–49 (IWLLVPIFTLILVIIIGVLVI), 106–126 (IAVISTLLSYLVIPFGYHLVL), 129–149 (LSIGVFLWIAISSIAPIGLLM), 250–270 (YSGIKFGLFYVASYLNLLVSS), 302–322 (IFGMTIGILITLAKAYLFLFI), and 338–358 (LLNLGWKFLLPISLGNLLLTT).

The protein belongs to the complex I subunit 1 family. As to quaternary structure, NDH is composed of at least 16 different subunits, 5 of which are encoded in the nucleus.

It localises to the plastid. The protein resides in the chloroplast thylakoid membrane. The catalysed reaction is a plastoquinone + NADH + (n+1) H(+)(in) = a plastoquinol + NAD(+) + n H(+)(out). The enzyme catalyses a plastoquinone + NADPH + (n+1) H(+)(in) = a plastoquinol + NADP(+) + n H(+)(out). In terms of biological role, NDH shuttles electrons from NAD(P)H:plastoquinone, via FMN and iron-sulfur (Fe-S) centers, to quinones in the photosynthetic chain and possibly in a chloroplast respiratory chain. The immediate electron acceptor for the enzyme in this species is believed to be plastoquinone. Couples the redox reaction to proton translocation, and thus conserves the redox energy in a proton gradient. The protein is NAD(P)H-quinone oxidoreductase subunit 1, chloroplastic of Acorus calamus (Sweet flag).